A 336-amino-acid chain; its full sequence is Flagellar filament 41 kDa core protein (336 aa).

The interval 208-236 (AAPVQEGVQQEGAQQPAPATAPSQGGVNS) is disordered. Residues 210–233 (PVQEGVQQEGAQQPAPATAPSQGG) show a composition bias toward low complexity.

It belongs to the bacterial flagellin family. In terms of assembly, the flagellum consists of an outer layer composed of repeating units of FlaA around a core that contains several antigenically related polypeptides.

The protein localises to the periplasmic flagellum. The protein resides in the periplasm. Functionally, component of the core of the flagella. In Borreliella burgdorferi (strain ATCC 35210 / DSM 4680 / CIP 102532 / B31) (Borrelia burgdorferi), this protein is Flagellar filament 41 kDa core protein (fla).